A 496-amino-acid polypeptide reads, in one-letter code: Flotillin-like protein 3 (496 aa).

Cysteine 37 carries the S-palmitoyl cysteine lipid modification. Residues 301 to 328 (VVREAELQLEVERKNALRLTEKLKAEKL) adopt a coiled-coil conformation.

This sequence belongs to the band 7/mec-2 family. Flotillin subfamily. In terms of processing, may be palmitoylated.

Its subcellular location is the cell membrane. It localises to the membrane. The protein resides in the caveola. Functionally, may act as a scaffolding protein within caveolar membranes, functionally participating in formation of caveolae or caveolae-like vesicles. The sequence is that of Flotillin-like protein 3 (FLOT3) from Oryza sativa subsp. japonica (Rice).